Reading from the N-terminus, the 371-residue chain is DNA replication and repair protein RecF (371 aa).

Position 30-37 (30-37 (GENAQGKT)) interacts with ATP.

The protein belongs to the RecF family.

The protein localises to the cytoplasm. The RecF protein is involved in DNA metabolism; it is required for DNA replication and normal SOS inducibility. RecF binds preferentially to single-stranded, linear DNA. It also seems to bind ATP. This chain is DNA replication and repair protein RecF, found in Lysinibacillus sphaericus (strain C3-41).